Reading from the N-terminus, the 190-residue chain is MTIILGIDPGSRVTGYGVIRQTGRTLEYLGSGVIRTQADDLPTRLKRIYAGVTEIITQFQPDMFAIEEVFLAKNPNSALKLGQARGTAIVAAVNRDLPVFEYAARLVKQTVVGIGSADKSQVQDMVARILKLSDKPQADAADALAIAITHAHTIRHSLHVAASAKTTETQEKLTALMRTRYSRGRFRLKV.

Active-site residues include Asp8, Glu67, and Asp139. Residues Asp8, Glu67, and Asp139 each coordinate Mg(2+).

The protein belongs to the RuvC family. As to quaternary structure, homodimer which binds Holliday junction (HJ) DNA. The HJ becomes 2-fold symmetrical on binding to RuvC with unstacked arms; it has a different conformation from HJ DNA in complex with RuvA. In the full resolvosome a probable DNA-RuvA(4)-RuvB(12)-RuvC(2) complex forms which resolves the HJ. Requires Mg(2+) as cofactor.

The protein localises to the cytoplasm. It catalyses the reaction Endonucleolytic cleavage at a junction such as a reciprocal single-stranded crossover between two homologous DNA duplexes (Holliday junction).. In terms of biological role, the RuvA-RuvB-RuvC complex processes Holliday junction (HJ) DNA during genetic recombination and DNA repair. Endonuclease that resolves HJ intermediates. Cleaves cruciform DNA by making single-stranded nicks across the HJ at symmetrical positions within the homologous arms, yielding a 5'-phosphate and a 3'-hydroxyl group; requires a central core of homology in the junction. The consensus cleavage sequence is 5'-(A/T)TT(C/G)-3'. Cleavage occurs on the 3'-side of the TT dinucleotide at the point of strand exchange. HJ branch migration catalyzed by RuvA-RuvB allows RuvC to scan DNA until it finds its consensus sequence, where it cleaves and resolves the cruciform DNA. The chain is Crossover junction endodeoxyribonuclease RuvC from Actinobacillus succinogenes (strain ATCC 55618 / DSM 22257 / CCUG 43843 / 130Z).